The chain runs to 182 residues: MVKALLVGSKVLIPNVDESRYIYSNGFYGKAIGISKPKDPKDIIRPLELSLIESVYLAKKGLIKVIDKNGEVLEYEKLYEYSSKIINKFDIMYRVYEDLREKGFIVRSGVKYGADFAVYTLGPGLEHAPYVVIAVDIDEEITPHELLSFGRVSHSTRKRLVLALVDRKSESVRYIMFKWVKM.

Active-site residues include Tyr119, His127, and Lys158.

It belongs to the tRNA-intron endonuclease family. Archaeal short subfamily. In terms of assembly, homotetramer; although the tetramer contains four active sites, only two participate in the cleavage. Therefore, it should be considered as a dimer of dimers.

It carries out the reaction pretRNA = a 3'-half-tRNA molecule with a 5'-OH end + a 5'-half-tRNA molecule with a 2',3'-cyclic phosphate end + an intron with a 2',3'-cyclic phosphate and a 5'-hydroxyl terminus.. In terms of biological role, endonuclease that removes tRNA introns. Cleaves pre-tRNA at the 5'- and 3'-splice sites to release the intron. The products are an intron and two tRNA half-molecules bearing 2',3' cyclic phosphate and 5'-OH termini. Recognizes a pseudosymmetric substrate in which 2 bulged loops of 3 bases are separated by a stem of 4 bp. The chain is tRNA-splicing endonuclease from Saccharolobus islandicus (strain L.S.2.15 / Lassen #1) (Sulfolobus islandicus).